A 1019-amino-acid polypeptide reads, in one-letter code: Phosphatidylinositol 3,4,5-trisphosphate 5-phosphatase 1 (1019 aa).

Residues 5 to 101 (WYHGNITRSK…GLVTHLQYPI (97 aa)) form the SH2 domain. The span at 103-116 (KEEEGPEEPDEEQE) shows a compositional bias: acidic residues. Disordered stretches follow at residues 103–133 (KEEEGPEEPDEEQEPAPPNVPPRNFAFTPPS) and 909–1019 (ETQN…PPTA). The SH3-binding 1 motif lies at 120–125 (PNVPPR). Polar residues-rich tracts occupy residues 909 to 931 (ETQNSMDHTASVAAISSQAKQSP) and 958 to 980 (PITSPPRTTLSTQKFSHSNTNRT). Residues 966–971 (TLSTQK) carry the SH3-binding 2 motif. An NPXY motif motif is present at residues 1004 to 1007 (NPLY). Tyr-1007 is subject to Phosphotyrosine. Positions 1010–1019 (VNNTLYPPTA) are enriched in polar residues.

It belongs to the inositol 1,4,5-trisphosphate 5-phosphatase family. In terms of processing, tyrosine phosphorylated by the members of the SRC family after exposure to a diverse array of extracellular stimuli.

The protein localises to the cytoplasm. The protein resides in the cell membrane. It localises to the membrane raft. It is found in the cytoskeleton. It carries out the reaction a 1,2-diacyl-sn-glycero-3-phospho-(1D-myo-inositol-3,4,5-trisphosphate) + H2O = a 1,2-diacyl-sn-glycero-3-phospho-(1D-myo-inositol-3,4-bisphosphate) + phosphate. The catalysed reaction is 1D-myo-inositol 1,3,4,5-tetrakisphosphate + H2O = 1D-myo-inositol 1,3,4-trisphosphate + phosphate. The enzyme catalyses a 1,2-diacyl-sn-glycero-3-phospho-(1D-myo-inositol-4,5-bisphosphate) + H2O = a 1,2-diacyl-sn-glycero-3-phospho-(1D-myo-inositol 4-phosphate) + phosphate. Its function is as follows. Phosphatidylinositol (PtdIns) phosphatase that specifically hydrolyzes the 5-phosphate of phosphatidylinositol-3,4,5-trisphosphate (PtdIns(3,4,5)P3) to produce PtdIns(3,4)P2, thereby negatively regulating the PI3K (phosphoinositide 3-kinase) pathways. Able also to hydrolyzes the 5-phosphate of phosphatidylinositol-4,5-bisphosphate (PtdIns(4,5)P3) and inositol 1,3,4,5-tetrakisphosphate. Acts as a negative regulator of B-cell antigen receptor signaling. Mediates signaling from the FC-gamma-RIIB receptor (FCGR2B), playing a central role in terminating signal transduction from activating immune/hematopoietic cell receptor systems. Acts as a negative regulator of myeloid cell proliferation/survival and chemotaxis, mast cell degranulation, immune cells homeostasis, integrin alpha-IIb/beta-3 signaling in platelets and JNK signaling in B-cells. The chain is Phosphatidylinositol 3,4,5-trisphosphate 5-phosphatase 1 (inpp5d) from Xenopus laevis (African clawed frog).